The sequence spans 102 residues: Omega-hexatoxin-Hi2b (102 aa).

The N-terminal stretch at 1–23 (MKFSKLSLTLALILTQAIFVLCG) is a signal peptide. Residues 24–56 (KINEDFMENGLESHALHDEIRKPIDTEKADAER) constitute a propeptide that is removed on maturation. 3 disulfide bridges follow: C61/C75, C68/C81, and C74/C86. Position 98 is a leucine amide (L98). The propeptide occupies 100–102 (RAL).

The protein belongs to the neurotoxin 15 family. 02 (omega-actx) subfamily. As to expression, expressed by the venom gland.

Its subcellular location is the secreted. In terms of biological role, potent inhibitor of insect, but not mammalian, voltage-gated calcium channels (Cav). The polypeptide is Omega-hexatoxin-Hi2b (Hadronyche infensa (Fraser island funnel-web spider)).